Consider the following 287-residue polypeptide: Mu-like prophage FluMu DNA transposition protein B (287 aa).

The 56-residue stretch at 7 to 62 (LKQHLSDSQITQAQLAREAGVNAGALSAYLNDNYKGNIADVEAKLAAYLEKKAVQA) folds into the HTH cro/C1-type domain. Residues 18 to 37 (QAQLAREAGVNAGALSAYLN) constitute a DNA-binding region (H-T-H motif). 98–105 (GMSGVGKT) contacts ATP.

Its function is as follows. This protein is a non-specific DNA-binding and ATP-hydrolyzing protein essential for bacteriophage integration and replication. The chain is Mu-like prophage FluMu DNA transposition protein B from Haemophilus influenzae (strain ATCC 51907 / DSM 11121 / KW20 / Rd).